A 366-amino-acid chain; its full sequence is Chorismate synthase (366 aa).

Arg48 is a binding site for NADP(+). Residues 125 to 127 (RSS), 241 to 242 (NA), Gly285, 300 to 304 (KPTSS), and Arg326 each bind FMN.

Belongs to the chorismate synthase family. As to quaternary structure, homotetramer. The cofactor is FMNH2.

The catalysed reaction is 5-O-(1-carboxyvinyl)-3-phosphoshikimate = chorismate + phosphate. It functions in the pathway metabolic intermediate biosynthesis; chorismate biosynthesis; chorismate from D-erythrose 4-phosphate and phosphoenolpyruvate: step 7/7. Functionally, catalyzes the anti-1,4-elimination of the C-3 phosphate and the C-6 proR hydrogen from 5-enolpyruvylshikimate-3-phosphate (EPSP) to yield chorismate, which is the branch point compound that serves as the starting substrate for the three terminal pathways of aromatic amino acid biosynthesis. This reaction introduces a second double bond into the aromatic ring system. The protein is Chorismate synthase of Paracoccus denitrificans (strain Pd 1222).